The primary structure comprises 147 residues: UPF0178 protein Patl_1318 (147 aa).

This sequence belongs to the UPF0178 family.

The polypeptide is UPF0178 protein Patl_1318 (Pseudoalteromonas atlantica (strain T6c / ATCC BAA-1087)).